A 145-amino-acid polypeptide reads, in one-letter code: Secreted RxLR effector protein 43 (145 aa).

The N-terminal stretch at 1–20 (MKVTMALAALCVALQAPCIG) is a signal peptide. Positions 31–34 (RHLR) match the RxLR motif.

The protein belongs to the RxLR effector family.

It is found in the secreted. It localises to the host nucleus. The protein resides in the host cytoplasm. Functionally, secreted effector that completely suppresses the host cell death induced by cell death-inducing proteins. The protein is Secreted RxLR effector protein 43 of Plasmopara viticola (Downy mildew of grapevine).